We begin with the raw amino-acid sequence, 414 residues long: Methylthioribose-1-phosphate isomerase (414 aa).

Residues 205-215 (SQSQGSENPPS) show a composition bias toward polar residues. The interval 205 to 224 (SQSQGSENPPSKKQKKDAAP) is disordered. The active-site Proton donor is the D283.

Belongs to the eIF-2B alpha/beta/delta subunits family. MtnA subfamily.

Its subcellular location is the cytoplasm. It is found in the nucleus. It carries out the reaction 5-(methylsulfanyl)-alpha-D-ribose 1-phosphate = 5-(methylsulfanyl)-D-ribulose 1-phosphate. It functions in the pathway amino-acid biosynthesis; L-methionine biosynthesis via salvage pathway; L-methionine from S-methyl-5-thio-alpha-D-ribose 1-phosphate: step 1/6. In terms of biological role, catalyzes the interconversion of methylthioribose-1-phosphate (MTR-1-P) into methylthioribulose-1-phosphate (MTRu-1-P). The protein is Methylthioribose-1-phosphate isomerase of Zygosaccharomyces rouxii (strain ATCC 2623 / CBS 732 / NBRC 1130 / NCYC 568 / NRRL Y-229).